The following is a 256-amino-acid chain: Biosynthetic peptidoglycan transglycosylase (256 aa).

A helical membrane pass occupies residues 26–48; that stretch reads VARWLAYAGGVFAGAWLATQLYY.

Belongs to the glycosyltransferase 51 family.

It is found in the cell inner membrane. The enzyme catalyses [GlcNAc-(1-&gt;4)-Mur2Ac(oyl-L-Ala-gamma-D-Glu-L-Lys-D-Ala-D-Ala)](n)-di-trans,octa-cis-undecaprenyl diphosphate + beta-D-GlcNAc-(1-&gt;4)-Mur2Ac(oyl-L-Ala-gamma-D-Glu-L-Lys-D-Ala-D-Ala)-di-trans,octa-cis-undecaprenyl diphosphate = [GlcNAc-(1-&gt;4)-Mur2Ac(oyl-L-Ala-gamma-D-Glu-L-Lys-D-Ala-D-Ala)](n+1)-di-trans,octa-cis-undecaprenyl diphosphate + di-trans,octa-cis-undecaprenyl diphosphate + H(+). It participates in cell wall biogenesis; peptidoglycan biosynthesis. Functionally, peptidoglycan polymerase that catalyzes glycan chain elongation from lipid-linked precursors. This Burkholderia thailandensis (strain ATCC 700388 / DSM 13276 / CCUG 48851 / CIP 106301 / E264) protein is Biosynthetic peptidoglycan transglycosylase.